Consider the following 398-residue polypeptide: Fatty-acid-binding protein 2 (398 aa).

The dodecanoate site is built by arginine 222, tyrosine 235, and serine 302.

The protein belongs to the chalcone isomerase family. As to expression, expressed in developing cotyledons, young seedlings, roots, seeds, embryos, macrospores, preanthesis and tapetum. Restricted to developing and reproductive tissues.

Its subcellular location is the plastid. The protein localises to the chloroplast stroma. In terms of biological role, fatty-acid-binding protein. Associates with saturated fatty acid. This Arabidopsis thaliana (Mouse-ear cress) protein is Fatty-acid-binding protein 2 (FAP2).